The primary structure comprises 166 residues: Putative tRNA (cytidine(34)-2'-O)-methyltransferase (166 aa).

S-adenosyl-L-methionine is bound by residues leucine 83, glycine 109, isoleucine 130, and serine 138.

The protein belongs to the class IV-like SAM-binding methyltransferase superfamily. RNA methyltransferase TrmH family. TrmL subfamily.

Its subcellular location is the cytoplasm. It carries out the reaction cytidine(34) in tRNA + S-adenosyl-L-methionine = 2'-O-methylcytidine(34) in tRNA + S-adenosyl-L-homocysteine + H(+). The catalysed reaction is 5-carboxymethylaminomethyluridine(34) in tRNA(Leu) + S-adenosyl-L-methionine = 5-carboxymethylaminomethyl-2'-O-methyluridine(34) in tRNA(Leu) + S-adenosyl-L-homocysteine + H(+). Could methylate the ribose at the nucleotide 34 wobble position in tRNA. In Mycoplasma genitalium (strain ATCC 33530 / DSM 19775 / NCTC 10195 / G37) (Mycoplasmoides genitalium), this protein is Putative tRNA (cytidine(34)-2'-O)-methyltransferase.